Here is a 177-residue protein sequence, read N- to C-terminus: ATP synthase subunit delta (177 aa).

Belongs to the ATPase delta chain family. In terms of assembly, F-type ATPases have 2 components, F(1) - the catalytic core - and F(0) - the membrane proton channel. F(1) has five subunits: alpha(3), beta(3), gamma(1), delta(1), epsilon(1). F(0) has three main subunits: a(1), b(2) and c(10-14). The alpha and beta chains form an alternating ring which encloses part of the gamma chain. F(1) is attached to F(0) by a central stalk formed by the gamma and epsilon chains, while a peripheral stalk is formed by the delta and b chains.

The protein resides in the cell inner membrane. Functionally, f(1)F(0) ATP synthase produces ATP from ADP in the presence of a proton or sodium gradient. F-type ATPases consist of two structural domains, F(1) containing the extramembraneous catalytic core and F(0) containing the membrane proton channel, linked together by a central stalk and a peripheral stalk. During catalysis, ATP synthesis in the catalytic domain of F(1) is coupled via a rotary mechanism of the central stalk subunits to proton translocation. Its function is as follows. This protein is part of the stalk that links CF(0) to CF(1). It either transmits conformational changes from CF(0) to CF(1) or is implicated in proton conduction. This Azobacteroides pseudotrichonymphae genomovar. CFP2 protein is ATP synthase subunit delta.